We begin with the raw amino-acid sequence, 148 residues long: Large ribosomal subunit protein uL15 (148 aa).

Positions 1-30 (MPSRLRKTRKLRGHVSHGHGRIGKHRKHPG) are enriched in basic residues. Residues 1–37 (MPSRLRKTRKLRGHVSHGHGRIGKHRKHPGGRGNAGG) form a disordered region. His39 is modified ((3S)-3-hydroxyhistidine). Lys47 and Lys55 each carry N6-acetyllysine. The residue at position 68 (Ser68) is a Phosphoserine. Lys110 is modified (N6-acetyllysine).

Belongs to the universal ribosomal protein uL15 family. Component of the large ribosomal subunit. Post-translationally, hydroxylated on His-39 by MINA.

Its subcellular location is the cytoplasm. Functionally, component of the large ribosomal subunit. The ribosome is a large ribonucleoprotein complex responsible for the synthesis of proteins in the cell. The sequence is that of Large ribosomal subunit protein uL15 (RPL27A) from Bos taurus (Bovine).